The chain runs to 100 residues: uncharacterized protein (100 aa).

Belongs to the csb family.

This is an uncharacterized protein from Dictyostelium discoideum (Social amoeba).